The sequence spans 107 residues: U1-lycotoxin-Ls1b (107 aa).

The first 20 residues, 1–20 (MMKVLVVFALLVTLISYSSS), serve as a signal peptide directing secretion. A propeptide spanning residues 21–41 (EGIDDLEADELLSLMANEQTR) is cleaved from the precursor. 4 cysteine pairs are disulfide-bonded: C44–C59, C51–C68, C58–C86, and C70–C84.

This sequence belongs to the neurotoxin 19 (CSTX) family. 04 (U1-Lctx) subfamily. As to expression, expressed by the venom gland.

Its subcellular location is the secreted. The protein is U1-lycotoxin-Ls1b of Lycosa singoriensis (Wolf spider).